The chain runs to 251 residues: 5'-nucleotidase SurE (251 aa).

A divalent metal cation-binding residues include D9, D10, S40, and N94.

It belongs to the SurE nucleotidase family. A divalent metal cation serves as cofactor.

It localises to the cytoplasm. It catalyses the reaction a ribonucleoside 5'-phosphate + H2O = a ribonucleoside + phosphate. Its function is as follows. Nucleotidase that shows phosphatase activity on nucleoside 5'-monophosphates. The protein is 5'-nucleotidase SurE of Aquifex aeolicus (strain VF5).